Consider the following 1562-residue polypeptide: NAC-alpha domain-containing protein 1 (1562 aa).

Low complexity predominate over residues 1–13; sequence MPGEAARAELLLP. Disordered stretches follow at residues 1–24, 56–110, 131–226, 249–288, 327–365, 381–458, 503–941, and 953–1423; these read MPGEAARAELLLPEADRPGPRTDL, FLPS…TEAP, SPRA…ADGD, SGWGLSPQGSMVDERELHPAGTPEPPSSESSLSADSSSSW, TPLSPEEEEEEAVADPDPGGDLAGEGEEDSTSASFLQSL, RDDT…GAYL, TPQA…EPLA, and GCAP…AMSK. Residues 195 to 208 are compositionally biased toward basic and acidic residues; sequence GDARDSEAELRDEL. Low complexity predominate over residues 275-287; the sequence is SSESSLSADSSSS. Positions 331–340 are enriched in acidic residues; it reads PEEEEEEAVA. The segment covering 385–397 has biased composition (low complexity); sequence SAASSDSDSASYA. 2 stretches are compositionally biased toward polar residues: residues 449–458 and 550–564; these read PQTSDRGAYL and QEETSLTLCPDSPQN. The segment covering 992-1007 has biased composition (low complexity); that stretch reads PAALDQVQQDDPQPAA. Over residues 1048-1074 the composition is skewed to basic and acidic residues; it reads PGREACLEARAHTGDGAKPDSPQKETL. Phosphoserine is present on Ser1068. Composition is skewed to low complexity over residues 1172–1182 and 1231–1241; these read APTSAPTSQQP and APGTLAGAALP. A compositionally biased stretch (acidic residues) spans 1254-1264; that stretch reads PQEDSVEDEEP. Low complexity-rich tracts occupy residues 1265–1284, 1298–1308, and 1335–1344; these read PGSLGLPPPQAGVQPAAAAV, SLSPHSPLLSP, and QSPAGPQGLS. The span at 1348–1357 shows a compositional bias: acidic residues; it reads QQEDEDSLEE. Ser1354 is subject to Phosphoserine. Residues 1411 to 1476 enclose the NAC-A/B domain; sequence SRSEKKARKA…AKIEDLSQQV (66 aa).

Belongs to the NAC-alpha family.

The protein resides in the cytoplasm. It is found in the nucleus. Functionally, may prevent inappropriate targeting of non-secretory polypeptides to the endoplasmic reticulum (ER). May bind to nascent polypeptide chains as they emerge from the ribosome and block their interaction with the signal recognition particle (SRP), which normally targets nascent secretory peptides to the ER. May also reduce the inherent affinity of ribosomes for protein translocation sites in the ER membrane (M sites). The protein is NAC-alpha domain-containing protein 1 (NACAD) of Homo sapiens (Human).